The sequence spans 462 residues: Cathepsin F (462 aa).

The signal sequence occupies residues 1 to 19 (MAPLLQLLWLLTLLSTVAL). The propeptide at 20 to 248 (SPVPAKPWAD…MSPAKSINDL (229 aa)) is activation peptide. N-linked (GlcNAc...) asparagine glycosylation is found at Asn-35, Asn-138, and Asn-173. 2 disulfides stabilise this stretch: Cys-270–Cys-311 and Cys-304–Cys-344. Cys-273 is an active-site residue. Asn-345 and Asn-356 each carry an N-linked (GlcNAc...) asparagine glycan. A disulfide bond links Cys-402 and Cys-450. His-409 is an active-site residue. A glycan (N-linked (GlcNAc...) asparagine) is linked at Asn-418. Asn-429 is a catalytic residue.

Belongs to the peptidase C1 family.

The protein resides in the lysosome. It carries out the reaction The recombinant enzyme cleaves synthetic substrates with Phe and Leu (better than Val) in P2, with high specificity constant (kcat/Km) comparable to that of cathepsin L.. Functionally, thiol protease which is believed to participate in intracellular degradation and turnover of proteins. Has also been implicated in tumor invasion and metastasis. The polypeptide is Cathepsin F (Ctsf) (Mus musculus (Mouse)).